A 184-amino-acid chain; its full sequence is Peptide deformylase (184 aa).

Fe cation is bound by residues Cys-111 and His-154. The active site involves Glu-155. Residue His-158 participates in Fe cation binding.

It belongs to the polypeptide deformylase family. Requires Fe(2+) as cofactor.

It catalyses the reaction N-terminal N-formyl-L-methionyl-[peptide] + H2O = N-terminal L-methionyl-[peptide] + formate. Functionally, removes the formyl group from the N-terminal Met of newly synthesized proteins. Requires at least a dipeptide for an efficient rate of reaction. N-terminal L-methionine is a prerequisite for activity but the enzyme has broad specificity at other positions. The protein is Peptide deformylase of Macrococcus caseolyticus (strain JCSC5402) (Macrococcoides caseolyticum).